A 120-amino-acid polypeptide reads, in one-letter code: Large ribosomal subunit protein uL24 (120 aa).

It belongs to the universal ribosomal protein uL24 family. Part of the 50S ribosomal subunit.

Functionally, one of two assembly initiator proteins, it binds directly to the 5'-end of the 23S rRNA, where it nucleates assembly of the 50S subunit. In terms of biological role, located at the polypeptide exit tunnel on the outside of the subunit. This is Large ribosomal subunit protein uL24 from Archaeoglobus fulgidus (strain ATCC 49558 / DSM 4304 / JCM 9628 / NBRC 100126 / VC-16).